Consider the following 458-residue polypeptide: RuvB-like helicase 1 (458 aa).

The disordered stretch occupies residues 1–29 (MVQISEVKGNSRDNRTAAHTHIKGLGLRP). 71-78 (GGPGTGKT) is a binding site for ATP.

Belongs to the RuvB family. May form heterododecamers with RVB2. Component of the SWR1 chromatin remodeling complex, the INO80 chromatin remodeling complex, and of the R2TP complex.

The protein localises to the nucleus. The enzyme catalyses ATP + H2O = ADP + phosphate + H(+). In terms of biological role, DNA helicase which participates in several chromatin remodeling complexes, including the SWR1 and the INO80 complexes. The SWR1 complex mediates the ATP-dependent exchange of histone H2A for the H2A variant HZT1 leading to transcriptional regulation of selected genes by chromatin remodeling. The INO80 complex remodels chromatin by shifting nucleosomes and is involved in DNA repair. Also involved in pre-rRNA processing. The polypeptide is RuvB-like helicase 1 (rvb1) (Emericella nidulans (strain FGSC A4 / ATCC 38163 / CBS 112.46 / NRRL 194 / M139) (Aspergillus nidulans)).